Here is a 236-residue protein sequence, read N- to C-terminus: Predicted GPI-anchored protein 43 (236 aa).

A signal peptide spans methionine 1–alanine 24. N-linked (GlcNAc...) asparagine glycosylation is found at asparagine 192, asparagine 195, and asparagine 198. Residue glycine 208 is the site of GPI-anchor amidated glycine attachment. Residues serine 209–tyrosine 236 constitute a propeptide, removed in mature form.

The protein localises to the cell membrane. This Candida albicans (strain SC5314 / ATCC MYA-2876) (Yeast) protein is Predicted GPI-anchored protein 43 (PGA43).